A 355-amino-acid chain; its full sequence is Sulfate/thiosulfate import ATP-binding protein CysA (355 aa).

The ABC transporter domain occupies 3 to 233 (IIINNVSKQF…PASPFVMGFI (231 aa)). An ATP-binding site is contributed by 35–42 (GPSGSGKS).

It belongs to the ABC transporter superfamily. Sulfate/tungstate importer (TC 3.A.1.6) family. As to quaternary structure, the complex is composed of two ATP-binding proteins (CysA), two transmembrane proteins (CysT and CysW) and a solute-binding protein (CysP).

The protein localises to the cell inner membrane. It carries out the reaction sulfate(out) + ATP + H2O = sulfate(in) + ADP + phosphate + H(+). It catalyses the reaction thiosulfate(out) + ATP + H2O = thiosulfate(in) + ADP + phosphate + H(+). In terms of biological role, part of the ABC transporter complex CysAWTP involved in sulfate/thiosulfate import. Responsible for energy coupling to the transport system. The chain is Sulfate/thiosulfate import ATP-binding protein CysA from Synechocystis sp. (strain ATCC 27184 / PCC 6803 / Kazusa).